A 213-amino-acid chain; its full sequence is Phosphoenolpyruvate guanylyltransferase (213 aa).

Phosphoenolpyruvate contacts are provided by Thr146, Gly161, and Ser164.

It belongs to the CofC family.

It carries out the reaction phosphoenolpyruvate + GTP + H(+) = enolpyruvoyl-2-diphospho-5'-guanosine + diphosphate. Its pathway is cofactor biosynthesis; coenzyme F420 biosynthesis. Its function is as follows. Guanylyltransferase that catalyzes the activation of phosphoenolpyruvate (PEP) as enolpyruvoyl-2-diphospho-5'-guanosine, via the condensation of PEP with GTP. It is involved in the biosynthesis of coenzyme F420, a hydride carrier cofactor. This Mycolicibacterium vanbaalenii (strain DSM 7251 / JCM 13017 / BCRC 16820 / KCTC 9966 / NRRL B-24157 / PYR-1) (Mycobacterium vanbaalenii) protein is Phosphoenolpyruvate guanylyltransferase.